Reading from the N-terminus, the 557-residue chain is Glutamyl-tRNA(Gln) amidotransferase subunit B, mitochondrial (557 aa).

The transit peptide at 1–41 (MAAPMLRWGCRGRRWAFARVDGGSCHRRGAPTGSTSNQIRG) directs the protein to the mitochondrion. The tract at residues 26–45 (HRRGAPTGSTSNQIRGESSV) is disordered. Residues 32 to 45 (TGSTSNQIRGESSV) are compositionally biased toward polar residues. Lys529 carries the post-translational modification N6-succinyllysine.

It belongs to the GatB/GatE family. GatB subfamily. Subunit of the heterotrimeric GatCAB amidotransferase (AdT) complex, composed of A (QRSL1), B (GATB) and C (GATC) subunits. As to expression, predominantly expressed in tissues characterized by high rates of oxidative phosphorylation (OxPhos), including muscle and heart.

Its subcellular location is the mitochondrion. The enzyme catalyses L-glutamyl-tRNA(Gln) + L-glutamine + ATP + H2O = L-glutaminyl-tRNA(Gln) + L-glutamate + ADP + phosphate + H(+). Its function is as follows. Allows the formation of correctly charged Gln-tRNA(Gln) through the transamidation of misacylated Glu-tRNA(Gln) in the mitochondria. The reaction takes place in the presence of glutamine and ATP through an activated gamma-phospho-Glu-tRNA(Gln). The protein is Glutamyl-tRNA(Gln) amidotransferase subunit B, mitochondrial of Homo sapiens (Human).